Reading from the N-terminus, the 614-residue chain is 1-deoxy-D-xylulose-5-phosphate synthase (614 aa).

Residues His-76 and 117-119 contribute to the thiamine diphosphate site; that span reads GHS. Asp-148 is a binding site for Mg(2+). Residues 149–150, Asn-177, Tyr-285, and Glu-366 contribute to the thiamine diphosphate site; that span reads GA. Residue Asn-177 coordinates Mg(2+).

It belongs to the transketolase family. DXPS subfamily. As to quaternary structure, homodimer. Requires Mg(2+) as cofactor. Thiamine diphosphate is required as a cofactor.

The enzyme catalyses D-glyceraldehyde 3-phosphate + pyruvate + H(+) = 1-deoxy-D-xylulose 5-phosphate + CO2. Its pathway is metabolic intermediate biosynthesis; 1-deoxy-D-xylulose 5-phosphate biosynthesis; 1-deoxy-D-xylulose 5-phosphate from D-glyceraldehyde 3-phosphate and pyruvate: step 1/1. Its function is as follows. Catalyzes the acyloin condensation reaction between C atoms 2 and 3 of pyruvate and glyceraldehyde 3-phosphate to yield 1-deoxy-D-xylulose-5-phosphate (DXP). This is 1-deoxy-D-xylulose-5-phosphate synthase from Pasteurella multocida (strain Pm70).